A 180-amino-acid chain; its full sequence is MGDCNISTSDNKQNRKNHEIRVPRVRVIGSDGEMIGVLSRDEALAMAEKEGLDLVEIQPQADPPVCKVMNFGKFKFEQQKKANEAKKKTKQVEIKELKFRPVTDEGDYQIKLRNMRRFLEEGDKVKINIRFRGREMSHQELGRQMAARIEMDLGDDVVIESRPRLEGRQMVMMVAPRKKS.

This sequence belongs to the IF-3 family. As to quaternary structure, monomer.

Its subcellular location is the cytoplasm. In terms of biological role, IF-3 binds to the 30S ribosomal subunit and shifts the equilibrium between 70S ribosomes and their 50S and 30S subunits in favor of the free subunits, thus enhancing the availability of 30S subunits on which protein synthesis initiation begins. In Xylella fastidiosa (strain Temecula1 / ATCC 700964), this protein is Translation initiation factor IF-3.